Here is a 287-residue protein sequence, read N- to C-terminus: Rhomboid-like protein 18 (287 aa).

6 helical membrane-spanning segments follow: residues 10-30 (NAPV…FFGI), 53-73 (LIIS…LYLL), 90-110 (VFIF…LSLT), 117-137 (LLTS…FLDI), 145-165 (VLGV…QLLL), and 172-192 (IFTG…IFGI). Residues 244-284 (EPSEEAIATLVSMGFDQNAARQALVHARNDVNAATNILLEA) form the UBA domain.

It belongs to the peptidase S54 family.

It localises to the membrane. Functionally, probable rhomboid-type serine protease that catalyzes intramembrane proteolysis. In Arabidopsis thaliana (Mouse-ear cress), this protein is Rhomboid-like protein 18.